Consider the following 85-residue polypeptide: Beta-defensin 18 (85 aa).

Positions 1–23 (MQSTMKMFGIILMVIFSVSCGPS) are cleaved as a signal peptide. Disulfide bonds link C39–C65, C46–C60, and C50–C66.

Belongs to the beta-defensin family.

The protein localises to the secreted. Has antibacterial activity. The polypeptide is Beta-defensin 18 (Defb18) (Mus musculus (Mouse)).